The following is a 477-amino-acid chain: MKHAIRHIHFVGLGGAGMSGIAEVLFNLGYRISGSDLVDSATLRRLQGLGIGTCLGHAGAHIEGADAVVTSTAVTADNPEVLAARAKKIPVVPRALMLAELMRLKQGIAIAGTHGKTTTTSLVTSVLAEAGLDPTFVIGGRLNSVGAHAKLGSGDYIVVEADESDASFLNLLPVMAVVTNIDADHMETYGHDFGRLKGAFVDFLHRMPFYGTAILCVDSPAVRDIMPGVTCPITSYGLSEDAQVRAVDLRADGARMHFTVQRSNGVTLPDLAVQLNLAGAHNVLNALSAIAVAVELNIPDAAVLRALAGFKGVGRRFQSYGQLPAKDGGQFSVIDDYGHHPVEMAATLAAARGAFPGRRLVLAFQPHRYSRTRDCFEDFVRVMGSADAVLLTEVYAAGEAPVVAADGRSLARALRVAGRVEPVFVADVADLPQAIAENARDGDLLLCMGAGSIGAVPGKLLEMLRNDEHTAMQRTAP.

112–118 lines the ATP pocket; sequence GTHGKTT.

The protein belongs to the MurCDEF family.

The protein localises to the cytoplasm. The catalysed reaction is UDP-N-acetyl-alpha-D-muramate + L-alanine + ATP = UDP-N-acetyl-alpha-D-muramoyl-L-alanine + ADP + phosphate + H(+). It functions in the pathway cell wall biogenesis; peptidoglycan biosynthesis. In terms of biological role, cell wall formation. This is UDP-N-acetylmuramate--L-alanine ligase from Verminephrobacter eiseniae (strain EF01-2).